Here is a 95-residue protein sequence, read N- to C-terminus: MRYQVKFREDALKEWQKLDKAIQQQFAKKLKKCCDNPHIPSAKLRGIKDCYKIKLRASGFRLVYQVIDEQLIIAVVAVGKRERSDVYNLASERMR.

It belongs to the RelE toxin family.

Toxic component of a type II toxin-antitoxin (TA) system. This Escherichia coli protein is Putative RelE-like toxin protein.